A 660-amino-acid polypeptide reads, in one-letter code: Bifunctional polymyxin resistance protein ArnA (660 aa).

The tract at residues 1–304 (MKAIVFAYHD…DMSMVTDVRV (304 aa)) is formyltransferase ArnAFT. The Proton donor; for formyltransferase activity role is filled by H104. (6R)-10-formyltetrahydrofolate is bound by residues R114 and 136–140 (VLKPD). Residues 314–660 (HRKRVLILGV…RGAVEELGKN (347 aa)) form a dehydrogenase ArnADH region. Residues D347 and 368 to 369 (DI) each bind NAD(+). Residues A393, Y398, and 432-433 (TS) contribute to the UDP-alpha-D-glucuronate site. E434 functions as the Proton acceptor; for decarboxylase activity in the catalytic mechanism. Residues R460, N492, 526-535 (KLVDGGEQKR), and Y613 each bind UDP-alpha-D-glucuronate. The active-site Proton donor; for decarboxylase activity is the R619.

This sequence in the N-terminal section; belongs to the Fmt family. UDP-L-Ara4N formyltransferase subfamily. In the C-terminal section; belongs to the NAD(P)-dependent epimerase/dehydratase family. UDP-glucuronic acid decarboxylase subfamily. In terms of assembly, homohexamer, formed by a dimer of trimers.

It carries out the reaction UDP-alpha-D-glucuronate + NAD(+) = UDP-beta-L-threo-pentopyranos-4-ulose + CO2 + NADH. The catalysed reaction is UDP-4-amino-4-deoxy-beta-L-arabinose + (6R)-10-formyltetrahydrofolate = UDP-4-deoxy-4-formamido-beta-L-arabinose + (6S)-5,6,7,8-tetrahydrofolate + H(+). Its pathway is nucleotide-sugar biosynthesis; UDP-4-deoxy-4-formamido-beta-L-arabinose biosynthesis; UDP-4-deoxy-4-formamido-beta-L-arabinose from UDP-alpha-D-glucuronate: step 1/3. It participates in nucleotide-sugar biosynthesis; UDP-4-deoxy-4-formamido-beta-L-arabinose biosynthesis; UDP-4-deoxy-4-formamido-beta-L-arabinose from UDP-alpha-D-glucuronate: step 3/3. The protein operates within bacterial outer membrane biogenesis; lipopolysaccharide biosynthesis. Bifunctional enzyme that catalyzes the oxidative decarboxylation of UDP-glucuronic acid (UDP-GlcUA) to UDP-4-keto-arabinose (UDP-Ara4O) and the addition of a formyl group to UDP-4-amino-4-deoxy-L-arabinose (UDP-L-Ara4N) to form UDP-L-4-formamido-arabinose (UDP-L-Ara4FN). The modified arabinose is attached to lipid A and is required for resistance to polymyxin and cationic antimicrobial peptides. The protein is Bifunctional polymyxin resistance protein ArnA of Photorhabdus laumondii subsp. laumondii (strain DSM 15139 / CIP 105565 / TT01) (Photorhabdus luminescens subsp. laumondii).